Consider the following 202-residue polypeptide: S-modulin (202 aa).

Gly2 carries the N-myristoyl glycine lipid modification. EF-hand domains follow at residues 25–60 (QEEL…FPDA), 61–96 (DPKA…TSSG), 97–132 (KANQ…IFKM), and 147–182 (TPEK…NKEI). 10 residues coordinate Ca(2+): Asp74, Asn76, Asp78, Thr80, Glu85, Asp110, Asp112, Asn114, Thr116, and Glu121.

The protein belongs to the recoverin family. The N-terminus is blocked.

Its function is as follows. Calcium-dependent regulator of light sensitivity of cGMP phosphodiesterase in rod outer segments. Controls rhodopsin phosphorylation in a Ca(2+)-dependent manner. The chain is S-modulin from Aquarana catesbeiana (American bullfrog).